The sequence spans 659 residues: Protein kinase byr2 (659 aa).

The SAM domain occupies Tyr4 to Phe67. Residues Pro180–Thr190 are compositionally biased toward low complexity. 2 disordered regions span residues Pro180–Pro209 and Ser354–Thr387. A compositionally biased stretch (polar residues) spans Ser354–Glu365. Residues Pro367–Thr380 show a composition bias toward low complexity. A Protein kinase domain is found at Trp394–Val658. ATP contacts are provided by residues Ile400–Val408 and Lys423. The Proton acceptor role is filled by Asp522.

Belongs to the protein kinase superfamily. STE Ser/Thr protein kinase family. MAP kinase kinase kinase subfamily. As to quaternary structure, interacts with rad24 and rad25; these prevent its translocation to the cell membrane during nitrogen starvation.

The protein resides in the cytoplasm. The protein localises to the cell membrane. It carries out the reaction L-seryl-[protein] + ATP = O-phospho-L-seryl-[protein] + ADP + H(+). It catalyses the reaction L-threonyl-[protein] + ATP = O-phospho-L-threonyl-[protein] + ADP + H(+). Functionally, serine/threonine protein kinase involved in conjugation and sporulation. It is thought that it phosphorylates the byr1 protein kinase which itself phosphorylate the spk1 kinase. This is Protein kinase byr2 from Schizosaccharomyces pombe (strain 972 / ATCC 24843) (Fission yeast).